The chain runs to 145 residues: 3-hydroxyacyl-[acyl-carrier-protein] dehydratase FabZ (145 aa).

His52 is a catalytic residue.

It belongs to the thioester dehydratase family. FabZ subfamily.

The protein resides in the cytoplasm. It catalyses the reaction a (3R)-hydroxyacyl-[ACP] = a (2E)-enoyl-[ACP] + H2O. Functionally, involved in unsaturated fatty acids biosynthesis. Catalyzes the dehydration of short chain beta-hydroxyacyl-ACPs and long chain saturated and unsaturated beta-hydroxyacyl-ACPs. The sequence is that of 3-hydroxyacyl-[acyl-carrier-protein] dehydratase FabZ from Deinococcus radiodurans (strain ATCC 13939 / DSM 20539 / JCM 16871 / CCUG 27074 / LMG 4051 / NBRC 15346 / NCIMB 9279 / VKM B-1422 / R1).